A 1977-amino-acid chain; its full sequence is Protein rotatin homolog (1977 aa).

The interval 141-166 (SVSSLSSNDIPSQATESADSSSNQIY) is disordered.

This sequence belongs to the rotatin family. Interacts with Rcd4;this complex is recruited to daughter centrioles before their conversion to centrosomes.

It is found in the cytoplasm. The protein resides in the cytoskeleton. It localises to the microtubule organizing center. Its subcellular location is the centrosome. The protein localises to the centriole. Participes in the structural integrity of both centrioles and basal bodies and in centriole cohesion. Participates in the later stages of centriole assembly through the interaction with Rcd4 leading to the centriole to centrosome conversion. This Drosophila melanogaster (Fruit fly) protein is Protein rotatin homolog.